We begin with the raw amino-acid sequence, 1209 residues long: Calcium-activated potassium channel subunit alpha-1 (1209 aa).

Positions 1–26 (MANGGGGGGGGSSGSSGGGGGGGGGE) are enriched in gly residues. 2 disordered regions span residues 1 to 29 (MANG…ETAL) and 42 to 64 (LDAS…SVHE). Topologically, residues 1 to 87 (MANGGGGGGG…VPCDSRGQRM (87 aa)) are extracellular. Positions 45–61 (SSSSSSSSSSSSSSSSS) are enriched in low complexity. A helical transmembrane segment spans residues 88-108 (WWAFLASSMVTFFGGLFIILL). The Cytoplasmic segment spans residues 109 to 179 (WRTLKYLWTV…MISAQTLTGR (71 aa)). 3 S-palmitoyl cysteine lipidation sites follow: C119, C120, and C122. A helical transmembrane segment spans residues 180–200 (VLVVLVFALSIGALVIYFIDS). Topologically, residues 201–215 (SNPIESCQNFYKDFT) are extracellular. A helical transmembrane segment spans residues 216-236 (LQIDMAFNVFFLLYFGLRFIA). The Cytoplasmic segment spans residues 237–240 (ANDK). Residues 241 to 261 (LWFWLEVNSVVDFFTVPPVFV) traverse the membrane as a helical segment. At 262 to 265 (SVYL) the chain is on the extracellular side. Residues 266 to 286 (NRSWLGLRFLRALRLIQFSEI) traverse the membrane as a helical; Voltage-sensor segment. Topologically, residues 287–301 (LQFLNILKTSNSIKL) are cytoplasmic. A helical transmembrane segment spans residues 302–322 (VNLLSIFISTWLTAAGFIHLV). Over 323–336 (ENSGDPWENFQNNQ) the chain is Extracellular. The pore-forming intramembrane region spans 337 to 359 (ALTYWECVYLLMVTMSTVGYGDV). Positions 353–356 (TVGY) match the Selectivity for potassium motif. The Extracellular portion of the chain corresponds to 360–368 (YAKTTLGRL). Residues 369–389 (FMVFFILGGLAMFASYVPEII) traverse the membrane as a helical segment. Over 390-1209 (ELIGNRKKYG…DKQKKEMVYR (820 aa)) the chain is Cytoplasmic. One can recognise an RCK N-terminal 1 domain in the interval 408 to 550 (RKHIVVCGHI…WNWKEGDDAI (143 aa)). Mg(2+)-binding residues include E440, Q463, and E465. The interval 557 to 577 (LGFIAQSCLAQGLSTMLANLF) is segment S7. The interval 614-634 (LSFPTVCELCFVKLKLLMIAI) is segment S8. The interval 682-686 (CKACH) is heme-binding motif. A disordered region spans residues 704–734 (EDEQPPTLSPKKKQRNGGMRNSPNTSPKLMR). A Phosphothreonine modification is found at T710. Phosphoserine occurs at positions 712, 725, and 729. The tract at residues 784-804 (VLSGHVVVCIFGDVSSALIGL) is segment S9. Positions 786-930 (SGHVVVCIFG…MDRSSPDNSP (145 aa)) constitute an RCK N-terminal 2 domain. T917 is modified (phosphothreonine). Residues S925 and S929 each carry the phosphoserine modification. Residues 977–999 (TELVNDTNVQFLDQDDDDDPDTE) carry the Calcium bowl motif. Q986, D989, D992, and D994 together coordinate Ca(2+). The segment at 1006-1026 (FACGTAFAVSVLDSLMSATYF) is segment S10. Residues 1160–1185 (RASLSHSSHSSQSSSKKSSSVHSIPS) are compositionally biased toward low complexity. The interval 1160–1209 (RASLSHSSHSSQSSSKKSSSVHSIPSTANRPNRPKSRESRDKQKKEMVYR) is disordered. Over residues 1194-1209 (KSRESRDKQKKEMVYR) the composition is skewed to basic and acidic residues. A phosphoserine mark is found at S1195 and S1198.

This sequence belongs to the potassium channel family. Calcium-activated (TC 1.A.1.3) subfamily. KCa1.1/KCNMA1 sub-subfamily. As to quaternary structure, homotetramer; which constitutes the calcium-activated potassium channel. Interacts with beta subunits KCNMB1, KCNMB2, KCNMB3 and KCNMB4. Interacts with gamma subunits LRRC26, LRRC38, LRRC52 and LRRC55. Beta and gamma subunits are accessory, and modulate its activity. Interacts with RAB11B. Post-translationally, phosphorylated. Phosphorylation by kinases such as PKA and/or PKG. In smooth muscles, phosphorylation affects its activity. In terms of processing, palmitoylation by ZDHHC22 and ZDHHC23 within the intracellular linker between the S0 and S1 transmembrane domains regulates localization to the plasma membrane. Depalmitoylated by LYPLA1 and LYPLAL1, leading to retard exit from the trans-Golgi network.

Its subcellular location is the cell membrane. It is found in the endoplasmic reticulum membrane. It carries out the reaction K(+)(in) = K(+)(out). Its activity is regulated as follows. Ethanol and carbon monoxide-bound heme increase channel activation. Heme inhibits channel activation. Functionally, potassium channel activated by both membrane depolarization or increase in cytosolic Ca(2+) that mediates export of K(+). It is also activated by the concentration of cytosolic Mg(2+). Its activation dampens the excitatory events that elevate the cytosolic Ca(2+) concentration and/or depolarize the cell membrane. It therefore contributes to repolarization of the membrane potential. Plays a key role in controlling excitability in a number of systems, such as regulation of the contraction of smooth muscle, the tuning of hair cells in the cochlea, regulation of transmitter release, and innate immunity. In smooth muscles, its activation by high level of Ca(2+), caused by ryanodine receptors in the sarcoplasmic reticulum, regulates the membrane potential. In cochlea cells, its number and kinetic properties partly determine the characteristic frequency of each hair cell and thereby helps to establish a tonotopic map. Kinetics of KCNMA1 channels are determined by alternative splicing, phosphorylation status and its combination with modulating beta subunits. Highly sensitive to both iberiotoxin (IbTx) and charybdotoxin (CTX). Its function is as follows. Potassium channel activated by both membrane depolarization or increase in cytosolic Ca(2+) that mediates export of K(+). This chain is Calcium-activated potassium channel subunit alpha-1 (Kcnma1), found in Rattus norvegicus (Rat).